The sequence spans 158 residues: uncharacterized protein (158 aa).

3 helical membrane-spanning segments follow: residues 45–65, 76–96, and 106–126; these read GIFF…PAVI, LAIG…IFAW, and FILV…VFAL.

This sequence to U.parvum UU007, UU041 and UU042.

It localises to the cell membrane. This is an uncharacterized protein from Ureaplasma parvum serovar 3 (strain ATCC 700970).